The chain runs to 46 residues: Large ribosomal subunit protein bL33A (46 aa).

The protein belongs to the bacterial ribosomal protein bL33 family.

The sequence is that of Large ribosomal subunit protein bL33A from Mesomycoplasma hyopneumoniae (strain 7448) (Mycoplasma hyopneumoniae).